Here is a 637-residue protein sequence, read N- to C-terminus: Anthranilate synthase, phenazine specific (637 aa).

An anthranilate synthase component I region spans residues 1 to 434 (MSQTAAHLME…QREQIQADFS (434 aa)). Positions 437–628 (QVLIVDAEDT…LRHALIHTPV (192 aa)) constitute a Glutamine amidotransferase type-1 domain. Active-site for GATase activity residues include Cys517, His602, and Glu604.

It catalyses the reaction chorismate + L-glutamine = anthranilate + pyruvate + L-glutamate + H(+). Its pathway is antibiotic biosynthesis; phenazine biosynthesis. Its function is as follows. Involved in the biosynthesis of the antibiotic, phenazine, a nitrogen-containing heterocyclic molecule having important roles in virulence, competition and biological control. The polypeptide is Anthranilate synthase, phenazine specific (phzB) (Pseudomonas chlororaphis (Pseudomonas aureofaciens)).